The chain runs to 130 residues: Small ribosomal subunit protein uS11 (130 aa).

Belongs to the universal ribosomal protein uS11 family. Part of the 30S ribosomal subunit. Interacts with proteins S7 and S18. Binds to IF-3.

Located on the platform of the 30S subunit, it bridges several disparate RNA helices of the 16S rRNA. Forms part of the Shine-Dalgarno cleft in the 70S ribosome. The chain is Small ribosomal subunit protein uS11 from Synechococcus sp. (strain WH7803).